The following is a 314-amino-acid chain: Porphobilinogen deaminase (314 aa).

S-(dipyrrolylmethanemethyl)cysteine is present on C243.

This sequence belongs to the HMBS family. In terms of assembly, monomer. Requires dipyrromethane as cofactor.

The catalysed reaction is 4 porphobilinogen + H2O = hydroxymethylbilane + 4 NH4(+). Its pathway is porphyrin-containing compound metabolism; protoporphyrin-IX biosynthesis; coproporphyrinogen-III from 5-aminolevulinate: step 2/4. Its function is as follows. Tetrapolymerization of the monopyrrole PBG into the hydroxymethylbilane pre-uroporphyrinogen in several discrete steps. This is Porphobilinogen deaminase from Bordetella bronchiseptica (strain ATCC BAA-588 / NCTC 13252 / RB50) (Alcaligenes bronchisepticus).